A 582-amino-acid chain; its full sequence is DBIRD complex subunit ZNF326 (582 aa).

The tract at residues 1–124 (MDFEDDYTHS…YRNSLDSFGG (124 aa)) is mediates transcriptional activation. Phosphoserine occurs at positions 48, 56, 63, 69, 81, 82, 91, 106, 114, 118, 121, and 137. Lys140 participates in a covalent cross-link: Glycyl lysine isopeptide (Lys-Gly) (interchain with G-Cter in SUMO2). Residues 154–194 (YSSYSSFSSPHMKPAPVGSRGRGTPAYPESTFGSRNYDAFG) form a disordered region. Arg173 bears the Omega-N-methylarginine mark. Ser212 bears the Phosphoserine mark. Residue Arg235 is modified to Omega-N-methylarginine. The Bipartite nuclear localization signal signature appears at 238-260 (KRKMMQPFNKPSGTFIKKPKLAK). A Glycyl lysine isopeptide (Lys-Gly) (interchain with G-Cter in SUMO2) cross-link involves residue Lys240. The tract at residues 243-302 (QPFNKPSGTFIKKPKLAKPMEKISLSKSPTKTDPKNEEEEKRRIEARREKQRRRREKNSE) is disordered. Residue Lys247 is modified to N6-acetyllysine; alternate. Lys247 is covalently cross-linked (Glycyl lysine isopeptide (Lys-Gly) (interchain with G-Cter in SUMO2); alternate). Ser249 carries the post-translational modification Phosphoserine. Phosphothreonine is present on Thr251. Residues Lys254 and Lys264 each participate in a glycyl lysine isopeptide (Lys-Gly) (interchain with G-Cter in SUMO2) cross-link. Position 270 is a phosphoserine (Ser270). The segment covering 272-290 (TKTDPKNEEEEKRRIEARR) has biased composition (basic and acidic residues). A C2H2 AKAP95-type 1 zinc finger spans residues 314 to 336 (CSFCKFRTFEEKDIELHLESSSH). A Glycyl lysine isopeptide (Lys-Gly) (interchain with G-Cter in SUMO2) cross-link involves residue Lys401. The C2H2 AKAP95-type 2 zinc finger occupies 407 to 430 (CSACSVYIPALHSSVQQHLKSPDH). Glycyl lysine isopeptide (Lys-Gly) (interchain with G-Cter in SUMO2) cross-links involve residues Lys459 and Lys467. Positions 472–582 (FEIQDHSQDQ…DFPVEQPEEN (111 aa)) are disordered. Residues 483 to 523 (IEGDEEDEEKIDEPIEEEEDEDEEEEAEEVGEVEEVEEVEE) are compositionally biased toward acidic residues. Residues 530–545 (EGEGNIQGVGEGGEVG) show a composition bias toward gly residues. A compositionally biased stretch (acidic residues) spans 552-567 (GVGEVEEVEELEEETA).

Belongs to the AKAP95 family. As to quaternary structure, component of the DBIRD complex. Interacts with CCAR2; the interaction is direct.

The protein resides in the nucleus matrix. In terms of biological role, core component of the DBIRD complex, a multiprotein complex that acts at the interface between core mRNP particles and RNA polymerase II (RNAPII) and integrates transcript elongation with the regulation of alternative splicing: the DBIRD complex affects local transcript elongation rates and alternative splicing of a large set of exons embedded in (A + T)-rich DNA regions. May play a role in neuronal differentiation and is able to bind DNA and activate expression in vitro. The polypeptide is DBIRD complex subunit ZNF326 (ZNF326) (Homo sapiens (Human)).